Reading from the N-terminus, the 490-residue chain is MAQRAVWLISHEPGTPLCGTVRFSRRYPTVEKRARVFNGASYVPVPEDGPFLKALLFELRLLDDDKDFVESRDSCSRINKTSIYGLLIGGEELWPVVAFLKNDMIYACVPLVEQTLSPRPPLISVSGVSQGFEFLFGIQDFLYSGQKNDSELNTKLSQLPDLLLQACPFGTLLDANLQNSLDNTNFASVTQPQKQPAWKTGTYKGKPQVSISITEKVKSMQYDKQGIADTWQVVGTVTCKCDLEGIMPNVTISLSLPTNGSPLQDILVHPCVTSLDSAILTSSSIDAMDDSAFSGPYKFPFTPPLESFNLCFYTSQVPVPPILGFYQMKEEEVQLRITINLKLHESVKNNFEFCEAHIPFYNRGPITHLEYKTSFGQLEVFREKSLLIWIIGQKFPKSMEISLSGTVTFGAKSHEKQPFDPICTGETAYLKLHFRILDYTLTGCYADQHSVQVFASGKPKISAHRKLISSDYYIWNSKAPAPVTYGSLLL.

The 271-residue stretch at 206 to 476 (KPQVSISITE…LISSDYYIWN (271 aa)) folds into the MHD domain.

This sequence belongs to the adaptor complexes medium subunit family. In terms of assembly, probably part of the adaptor protein complex 5 (AP-5) a tetramer composed of AP5B1, AP5M1, AP5S1 and AP5Z1. As to expression, expressed in various tumor cell lines including Jurkat, Hep-G2 and HeLa.

The protein localises to the cytoplasm. It is found in the cytosol. It localises to the late endosome membrane. Its subcellular location is the lysosome membrane. Its function is as follows. As part of AP-5, a probable fifth adaptor protein complex it may be involved in endosomal transport. According to PubMed:18395520, it may play a role in cell death. This is AP-5 complex subunit mu-1 (AP5M1) from Homo sapiens (Human).